The sequence spans 382 residues: Galactokinase (382 aa).

34 to 37 contributes to the substrate binding site; the sequence is EHTD. Position 124 to 130 (124 to 130) interacts with ATP; that stretch reads GAGLSSS. Positions 130 and 162 each coordinate Mg(2+). Asp-174 functions as the Proton acceptor in the catalytic mechanism. Tyr-223 provides a ligand contact to substrate.

It belongs to the GHMP kinase family. GalK subfamily.

Its subcellular location is the cytoplasm. It carries out the reaction alpha-D-galactose + ATP = alpha-D-galactose 1-phosphate + ADP + H(+). The protein operates within carbohydrate metabolism; galactose metabolism. Functionally, catalyzes the transfer of the gamma-phosphate of ATP to D-galactose to form alpha-D-galactose-1-phosphate (Gal-1-P). This Enterobacter sp. (strain 638) protein is Galactokinase.